The primary structure comprises 345 residues: Platelet-derived growth factor C (345 aa).

An N-terminal signal peptide occupies residues 1–22; sequence MLLLGLLLLTSALAGQRTGTRA. Polar residues predominate over residues 24–33; the sequence is SNLSSKLQLS. The tract at residues 24 to 45 is disordered; it reads SNLSSKLQLSSDKEQNGVQDPR. Asn-25 carries N-linked (GlcNAc...) asparagine glycosylation. Over residues 34-45 the composition is skewed to basic and acidic residues; it reads SDKEQNGVQDPR. The 118-residue stretch at 46–163 folds into the CUB domain; sequence HERVVTISGN…PGFCIHYSII (118 aa). The N-linked (GlcNAc...) asparagine glycan is linked to Asn-55. 4 disulfides stabilise this stretch: Cys-104–Cys-124, Cys-250–Cys-294, Cys-280–Cys-335, and Cys-287–Cys-337.

Belongs to the PDGF/VEGF growth factor family. In terms of assembly, homodimer; disulfide-linked. Interacts with PDGFRA homodimers, and with heterodimers formed by PDGFRA and PDGFRB. Interacts (via CUB domain) with PLAT (via kringle domain). Post-translationally, proteolytic removal of the N-terminal CUB domain releasing the core domain is necessary for unmasking the receptor-binding epitopes of the core domain. Cleavage after basic residues in the hinge region (region connecting the CUB and growth factor domains) gives rise to the receptor-binding form. Cleaved by PLAT and PLG. In terms of processing, sumoylated with SUMO1. N-glycosylated. Highly expressed in the kidney and adrenal gland. In the kidney, it is expressed in arteriolar smooth muscle cells and in epithelial cells of individual segments (at protein level).

Its subcellular location is the cytoplasm. It localises to the cytosol. The protein localises to the secreted. The protein resides in the nucleus. It is found in the cytoplasmic granule. Its subcellular location is the cell membrane. In terms of biological role, growth factor that plays an essential role in the regulation of embryonic development, cell proliferation, cell migration, survival and chemotaxis. Potent mitogen and chemoattractant for cells of mesenchymal origin. Required for normal skeleton formation during embryonic development, especially for normal development of the craniofacial skeleton and for normal development of the palate. Required for normal skin morphogenesis during embryonic development. Plays an important role in wound healing, where it appears to be involved in three stages: inflammation, proliferation and remodeling. Plays an important role in angiogenesis and blood vessel development. Involved in fibrotic processes, in which transformation of interstitial fibroblasts into myofibroblasts plus collagen deposition occurs. The CUB domain has mitogenic activity in coronary artery smooth muscle cells, suggesting a role beyond the maintenance of the latency of the PDGF domain. In the nucleus, PDGFC seems to have additional function. The chain is Platelet-derived growth factor C (Pdgfc) from Rattus norvegicus (Rat).